A 475-amino-acid polypeptide reads, in one-letter code: Sulfate adenylyltransferase subunit 1 (475 aa).

In terms of domain architecture, tr-type G spans 25–239 (KSLLRFLTCG…EVLETVEIQR (215 aa)). The segment at 34-41 (GSVDDGKS) is G1. Position 34 to 41 (34 to 41 (GSVDDGKS)) interacts with GTP. Positions 92-96 (GITID) are G2. The tract at residues 113–116 (DTPG) is G3. Residues 113 to 117 (DTPGH) and 168 to 171 (NKMD) each bind GTP. A G4 region spans residues 168–171 (NKMD). Positions 206-208 (SAL) are G5.

Belongs to the TRAFAC class translation factor GTPase superfamily. Classic translation factor GTPase family. CysN/NodQ subfamily. As to quaternary structure, heterodimer composed of CysD, the smaller subunit, and CysN.

It catalyses the reaction sulfate + ATP + H(+) = adenosine 5'-phosphosulfate + diphosphate. The protein operates within sulfur metabolism; hydrogen sulfide biosynthesis; sulfite from sulfate: step 1/3. Functionally, with CysD forms the ATP sulfurylase (ATPS) that catalyzes the adenylation of sulfate producing adenosine 5'-phosphosulfate (APS) and diphosphate, the first enzymatic step in sulfur assimilation pathway. APS synthesis involves the formation of a high-energy phosphoric-sulfuric acid anhydride bond driven by GTP hydrolysis by CysN coupled to ATP hydrolysis by CysD. The polypeptide is Sulfate adenylyltransferase subunit 1 (Escherichia coli O139:H28 (strain E24377A / ETEC)).